The primary structure comprises 83 residues: Cytochrome b559 subunit alpha (83 aa).

A helical transmembrane segment spans residues 21 to 35; it reads IIHSITIPSLFIAGW. Position 23 (His-23) interacts with heme.

Belongs to the PsbE/PsbF family. Heterodimer of an alpha subunit and a beta subunit. PSII is composed of 1 copy each of membrane proteins PsbA, PsbB, PsbC, PsbD, PsbE, PsbF, PsbH, PsbI, PsbJ, PsbK, PsbL, PsbM, PsbT, PsbX, PsbY, PsbZ, Psb30/Ycf12, at least 3 peripheral proteins of the oxygen-evolving complex and a large number of cofactors. It forms dimeric complexes. Requires heme b as cofactor.

Its subcellular location is the plastid. The protein resides in the chloroplast thylakoid membrane. This b-type cytochrome is tightly associated with the reaction center of photosystem II (PSII). PSII is a light-driven water:plastoquinone oxidoreductase that uses light energy to abstract electrons from H(2)O, generating O(2) and a proton gradient subsequently used for ATP formation. It consists of a core antenna complex that captures photons, and an electron transfer chain that converts photonic excitation into a charge separation. This chain is Cytochrome b559 subunit alpha, found in Lotus japonicus (Lotus corniculatus var. japonicus).